The chain runs to 214 residues: Nascent polypeptide-associated complex subunit alpha (214 aa).

2 disordered regions span residues 1–57 (MSNP…NEKK) and 119–179 (ASAA…EDKD). Acidic residues predominate over residues 22–38 (AEDEGSDSSDSEGEGEV). In terms of domain architecture, NAC-A/B spans 52-117 (SRNEKKARKS…AKIEDLNSQA (66 aa)). Residues 119-128 (ASAAAQLAAQ) show a composition bias toward low complexity. Residues 129–159 (ESHDHAGHDHSGHDHSHDHGKGKAVDTGDEK) show a composition bias toward basic and acidic residues. Over residues 160-171 (KEEEEDDTEEVD) the composition is skewed to acidic residues. Positions 175-214 (LEDKDIELVMTQASVSRNKAVKALKENDNDIVNSIMALSI) constitute a UBA domain.

It belongs to the NAC-alpha family. Part of the nascent polypeptide-associated complex (NAC), consisting of EGD2 and EGD1. NAC associates with ribosomes via EGD1.

The protein resides in the cytoplasm. Its subcellular location is the nucleus. In terms of biological role, component of the nascent polypeptide-associated complex (NAC), a dynamic component of the ribosomal exit tunnel, protecting the emerging polypeptides from interaction with other cytoplasmic proteins to ensure appropriate nascent protein targeting. The NAC complex also promotes mitochondrial protein import by enhancing productive ribosome interactions with the outer mitochondrial membrane and blocks the inappropriate interaction of ribosomes translating non-secretory nascent polypeptides with translocation sites in the membrane of the endoplasmic reticulum. EGD2 may also be involved in transcription regulation. The chain is Nascent polypeptide-associated complex subunit alpha (egd2) from Sclerotinia sclerotiorum (strain ATCC 18683 / 1980 / Ss-1) (White mold).